The sequence spans 89 residues: DNA/RNA-binding protein Alba 2 (89 aa).

An N6-acetyllysine modification is found at Lys-12. Zn(2+)-binding residues include Lys-14, Asp-18, and Asp-22.

The protein belongs to the histone-like Alba family. In terms of assembly, forms homodimers and homotetramers. Homodimer at pH below 6.0. Forms homotetramers and higher order homooligomers at near the growth temperature of 80 degrees Celsius and pH 7.0. Interacts with Alba 1; heterodimers lack cooperative DNA-binding behavior and result in more compact chromatin structures compared to Alba 1 homodimers. Acetylated. Acetylation at Lys-12 decreases DNA-binding affinity.

The protein localises to the cytoplasm. It localises to the chromosome. Its function is as follows. Binds single-stranded DNA, RNA and double-stranded DNA. Involved in DNA compaction. The sequence is that of DNA/RNA-binding protein Alba 2 from Saccharolobus solfataricus (strain ATCC 35092 / DSM 1617 / JCM 11322 / P2) (Sulfolobus solfataricus).